The primary structure comprises 292 residues: NAD kinase (292 aa).

The active-site Proton acceptor is the D73. NAD(+)-binding positions include 73 to 74, 147 to 148, H158, R175, D177, 188 to 193, and Q247; these read DG, NE, and TAYSLS.

Belongs to the NAD kinase family. Requires a divalent metal cation as cofactor.

It localises to the cytoplasm. It carries out the reaction NAD(+) + ATP = ADP + NADP(+) + H(+). Its function is as follows. Involved in the regulation of the intracellular balance of NAD and NADP, and is a key enzyme in the biosynthesis of NADP. Catalyzes specifically the phosphorylation on 2'-hydroxyl of the adenosine moiety of NAD to yield NADP. In Edwardsiella ictaluri (strain 93-146), this protein is NAD kinase.